The primary structure comprises 916 residues: Translation initiation factor IF-2 (916 aa).

Residues 151 to 191 (NLDEQQRLAESDRARDEAIQRKRDEEQAAKDRVEAERKAAE) show a composition bias toward basic and acidic residues. Disordered regions lie at residues 151-262 (NLDE…SHVM) and 280-328 (HLSA…ERPT). Low complexity-rich tracts occupy residues 192–243 (EAAA…ATPA) and 293–305 (RGKPTGRPGSSSS). Residues 415 to 584 (SRPPVVTIMG…SLQAEVLELK (170 aa)) enclose the tr-type G domain. Positions 424 to 431 (GHVDHGKT) are G1. 424 to 431 (GHVDHGKT) serves as a coordination point for GTP. A G2 region spans residues 449–453 (GITQH). The G3 stretch occupies residues 470–473 (DTPG). Residues 470 to 474 (DTPGH) and 524 to 527 (NKID) each bind GTP. Positions 524-527 (NKID) are G4. The interval 560-562 (SAK) is G5.

Belongs to the TRAFAC class translation factor GTPase superfamily. Classic translation factor GTPase family. IF-2 subfamily.

It localises to the cytoplasm. In terms of biological role, one of the essential components for the initiation of protein synthesis. Protects formylmethionyl-tRNA from spontaneous hydrolysis and promotes its binding to the 30S ribosomal subunits. Also involved in the hydrolysis of GTP during the formation of the 70S ribosomal complex. The protein is Translation initiation factor IF-2 of Xanthomonas campestris pv. campestris (strain ATCC 33913 / DSM 3586 / NCPPB 528 / LMG 568 / P 25).